Consider the following 459-residue polypeptide: Putative BTB/POZ domain-containing protein R541 (459 aa).

The BTB domain occupies 76–143 (NHITINVGGK…NQKSTNIELY (68 aa)).

It belongs to the mimivirus BTB/WD family.

This chain is Putative BTB/POZ domain-containing protein R541, found in Acanthamoeba polyphaga mimivirus (APMV).